Here is a 712-residue protein sequence, read N- to C-terminus: UvrABC system protein B (712 aa).

Positions 35 to 421 (RRVQAGEKDV…SDGAVEQIIR (387 aa)) constitute a Helicase ATP-binding domain. An ATP-binding site is contributed by 48 to 55 (GATGTGKS). Positions 101 to 124 (YYDYYQPEAYVPQSDTYIEKDSSI) match the Beta-hairpin motif. Residues 438–604 (QIDDLVHEIR…PLRKKINDIV (167 aa)) enclose the Helicase C-terminal domain. The interval 625–655 (TKEGKGAKAPVPALGGQKTGGAKAARGRAKE) is disordered. The UVR domain maps to 667 to 702 (AEQIEDLTTRMRAAAADLQFEIAARLRDEVSEMKKE).

Belongs to the UvrB family. As to quaternary structure, forms a heterotetramer with UvrA during the search for lesions. Interacts with UvrC in an incision complex.

The protein localises to the cytoplasm. In terms of biological role, the UvrABC repair system catalyzes the recognition and processing of DNA lesions. A damage recognition complex composed of 2 UvrA and 2 UvrB subunits scans DNA for abnormalities. Upon binding of the UvrA(2)B(2) complex to a putative damaged site, the DNA wraps around one UvrB monomer. DNA wrap is dependent on ATP binding by UvrB and probably causes local melting of the DNA helix, facilitating insertion of UvrB beta-hairpin between the DNA strands. Then UvrB probes one DNA strand for the presence of a lesion. If a lesion is found the UvrA subunits dissociate and the UvrB-DNA preincision complex is formed. This complex is subsequently bound by UvrC and the second UvrB is released. If no lesion is found, the DNA wraps around the other UvrB subunit that will check the other stand for damage. The protein is UvrABC system protein B of Streptomyces coelicolor (strain ATCC BAA-471 / A3(2) / M145).